Consider the following 291-residue polypeptide: MNMIWRNSISCLRLGKVPHRYQSGYHPVAPLGSRILTDPAKVFEHNMWDHMQWSKEEEAAARKKVKENSAVRVLLEEQVKYEREASKYWDTFYKIHKNKFFKDRNWLLREFPEILPVDQKPEEKARESSWDHVKTSATNRFSRMHCPTVPDEKNHYEKSSGSSEGQSKTESDFSNLDSEKHKKGPMETGLFPGSNATFRILEVGCGAGNSVFPILNTLENSPESFLYCCDFASGAVELVKSHSSYRATQCFAFVHDVCDDGLPYPFPDGILDVILLVFVLSSIHPDRTLFI.

The N-terminal 21 residues, 1–21 (MNMIWRNSISCLRLGKVPHRY), are a transit peptide targeting the mitochondrion. A Glycyl lysine isopeptide (Lys-Gly) (interchain with G-Cter in SUMO) cross-link involves residue lysine 80. Positions 89 and 93 each coordinate S-adenosyl-L-methionine. The tract at residues 141 to 187 (FSRMHCPTVPDEKNHYEKSSGSSEGQSKTESDFSNLDSEKHKKGPME) is disordered. A compositionally biased stretch (low complexity) spans 159–168 (SSGSSEGQSK). Residues glycine 204, aspartate 230, and aspartate 256 each coordinate S-adenosyl-L-methionine.

It belongs to the methyltransferase superfamily. METL family. Interacts with EP300.

It localises to the mitochondrion. It catalyses the reaction cytidine(32) in tRNA(Ser) + S-adenosyl-L-methionine = N(3)-methylcytidine(32) in tRNA(Ser) + S-adenosyl-L-homocysteine + H(+). It carries out the reaction cytidine(32) in tRNA(Thr) + S-adenosyl-L-methionine = N(3)-methylcytidine(32) in tRNA(Thr) + S-adenosyl-L-homocysteine + H(+). The enzyme catalyses a cytidine in mRNA + S-adenosyl-L-methionine = an N(3)-methylcytidine in mRNA + S-adenosyl-L-homocysteine + H(+). In terms of biological role, mitochondrial S-adenosyl-L-methionine-dependent methyltransferase that mediates N(3)-methylcytidine modification of residue 32 of the tRNA anticodon loop of mitochondrial tRNA(Ser)(UCN) and tRNA(Thr). N(3)-methylcytidine methylation modification regulates mitochondrial translation efficiency and is required for activity of the respiratory chain. N(3)-methylcytidine methylation of mitochondrial tRNA(Ser)(UCN) requires the formation of N(6)-dimethylallyladenosine(37) (i6A37) by TRIT1 as prerequisite. May also mediate N(3)-methylcytidine modification of mRNAs. The existence of N(3)-methylcytidine modification on mRNAs is however unclear, and additional evidences are required to confirm the role of the N(3)-methylcytidine-specific mRNA methyltransferase activity of METTL8 in vivo. The protein is tRNA N(3)-cytidine methyltransferase METTL8, mitochondrial of Homo sapiens (Human).